A 117-amino-acid chain; its full sequence is DNA-directed RNA polymerase subunit omega (117 aa).

Belongs to the RNA polymerase subunit omega family. As to quaternary structure, the RNAP catalytic core consists of 2 alpha, 1 beta, 1 beta' and 1 omega subunit. When a sigma factor is associated with the core the holoenzyme is formed, which can initiate transcription.

It carries out the reaction RNA(n) + a ribonucleoside 5'-triphosphate = RNA(n+1) + diphosphate. Promotes RNA polymerase assembly. Latches the N- and C-terminal regions of the beta' subunit thereby facilitating its interaction with the beta and alpha subunits. This Ruegeria sp. (strain TM1040) (Silicibacter sp.) protein is DNA-directed RNA polymerase subunit omega.